Reading from the N-terminus, the 146-residue chain is Acidic phospholipase A2 CM-II (146 aa).

The first 21 residues, methionine 1–serine 21, serve as a signal peptide directing secretion. Positions asparagine 22–leucine 27 are excised as a propeptide. Disulfide bonds link cysteine 38/cysteine 98, cysteine 53/cysteine 145, cysteine 55/cysteine 71, cysteine 70/cysteine 126, cysteine 77/cysteine 119, cysteine 87/cysteine 112, and cysteine 105/cysteine 117. Residues tyrosine 54, glycine 56, and glycine 58 each contribute to the Ca(2+) site. Histidine 74 is an active-site residue. Aspartate 75 is a Ca(2+) binding site. The active site involves aspartate 120.

Belongs to the phospholipase A2 family. Group I subfamily. D49 sub-subfamily. Ca(2+) is required as a cofactor. In terms of tissue distribution, expressed by the venom gland.

The protein resides in the secreted. The catalysed reaction is a 1,2-diacyl-sn-glycero-3-phosphocholine + H2O = a 1-acyl-sn-glycero-3-phosphocholine + a fatty acid + H(+). Its function is as follows. PLA2 catalyzes the calcium-dependent hydrolysis of the 2-acyl groups in 3-sn-phosphoglycerides. Is able to suppress the acetylcholine (ACh)-evoked current mediated by alpha-7 (CHRNA7)-similar nAChRs in L.stagnalis neurons (IC(50)=37 nM) and to compete with alpha-bungarotoxin for binding to muscle- and alpha-7 neuronal nAChR types, as well as to AChBPs. In inhibition of alpha-bungarotoxin binding, this toxin is similarly active against T.californica nAChR (IC(50)=1.2 uM), human alpha-7 nAChR (IC(50)=3.2 uM), and L.stagnalis AChBP (IC(50)=1.0 uM), whereas it is not active against A.californica AChBP (IC(50)&gt;100 uM). The protein is Acidic phospholipase A2 CM-II of Naja kaouthia (Monocled cobra).